The primary structure comprises 218 residues: uncharacterized protein (218 aa).

This is an uncharacterized protein from Acholeplasma phage L2 (Bacteriophage L2).